Reading from the N-terminus, the 577-residue chain is MGTRLLALAPWLLLLLLQLAGASHVVHRSLEAEQAPSSVPASIVSPLLRTGYHFQPPMNWINDPNGPLYYKGWYHLFYQYNPKGAVWGNIVWAHSVSQDLINWIALEPAIKPDIPSDQYGCWSGSATILPDGTPAILYTGIDRPNINYQVQNIAFPKNASDPLLREWVKPAYNPVATPEPGMNATQFRDPTTAWYADGHWRMLVGGLKGARLGLAYLYRSRDFKTWVRAKHPLHSALTGMWECPDFFPLQAPGLQAGLDTSVPSSKYVLKNSLDLTRYDYYTVGIYNKVTERYVPDNPAGDYHRLRYDYGNFYASKTFFDPVKHRRILLGWANESDSVTYDKAKGWAGIHAIPRKVWLDPSGKQLLQWPIEELETLRGKSVSVFDKVVKPGEHFQVTGLGTYQADVEVSLEVSGLEKAEALDPAFGDDAERLCGAKGADVRGGVVFGLWVLASAGLEEKTAVFFRVFKPAGHGAKPVVLMCTDPTKSSLSPDLYKPTFAGFVDTDISSGKISLRSLIDRSVVESFGAGGKTCILSRVYPSMAIGDKAHLYVFNNGEADIKISHLKAWEMKKPLMNGA.

An N-terminal signal peptide occupies residues 1-22 (MGTRLLALAPWLLLLLLQLAGA). Asp63 is an active-site residue. Residues Asn158, Asn183, and Asn333 are each glycosylated (N-linked (GlcNAc...) asparagine).

The protein belongs to the glycosyl hydrolase 32 family. As to expression, expressed in roots, leaves and flowers. Weakly expressed in seeds.

The protein localises to the secreted. Its subcellular location is the extracellular space. It is found in the apoplast. The protein resides in the cell wall. The enzyme catalyses Hydrolysis of terminal non-reducing beta-D-fructofuranoside residues in beta-D-fructofuranosides.. In terms of biological role, may play a role in sucrose partitioning during seed development and in stress response. The sequence is that of Beta-fructofuranosidase, insoluble isoenzyme 1 (CIN1) from Oryza sativa subsp. japonica (Rice).